Here is a 100-residue protein sequence, read N- to C-terminus: CCAAT/enhancer-binding protein homolog 2 (100 aa).

2 disordered regions span residues 1–60 and 79–100; these read MSGN…ETLE and AYAK…SSAV. The 64-residue stretch at 17-80 folds into the bZIP domain; sequence EDDYSTKRKR…SFLKEMFMAY (64 aa). Positions 23–48 are basic motif; it reads KRKRNNEAVNRTRQKKRQEENDTAEK. A coiled-coil region spans residues 24–83; that stretch reads RKRNNEAVNRTRQKKRQEENDTAEKVDELKKENETLERKVEQLQKELSFLKEMFMAYAKN. The span at 39–60 shows a compositional bias: basic and acidic residues; sequence RQEENDTAEKVDELKKENETLE. The tract at residues 52 to 73 is leucine-zipper; that stretch reads LKKENETLERKVEQLQKELSFL. The segment covering 88 to 100 has biased composition (pro residues); sequence GPPPPPPPSSSAV.

Belongs to the bZIP family. C/EBP subfamily. In terms of assembly, interacts with transcription factor zip-11. Expressed broadly in somatic tissues including the intestine.

The protein localises to the nucleus. Transcription factor that binds to the promoter and the enhancer regions of target genes. Regulates expression of genes involved in fat metabolism, including ech-1.1 and fat-5. Has a protective role in response to infection by the Gram-negative bacterium P.aeruginosa. Required for the activation of infection response gene irg-1 following P.aeruginosa infection. Required to prevent P.aeruginosa ToxA-mediated lethality. May also function in concert with transcription factor zip-11 to mediate immune responses, independently of the pmk-1/p38 MAPK pathway. May act together with the bZIP transcription factor, zip-2. This Caenorhabditis elegans protein is CCAAT/enhancer-binding protein homolog 2.